The primary structure comprises 226 residues: Endonuclease V (226 aa).

Mg(2+) is bound by residues Asp42 and Asp110.

The protein belongs to the endonuclease V family. The cofactor is Mg(2+).

It is found in the cytoplasm. The catalysed reaction is Endonucleolytic cleavage at apurinic or apyrimidinic sites to products with a 5'-phosphate.. DNA repair enzyme involved in the repair of deaminated bases. Selectively cleaves double-stranded DNA at the second phosphodiester bond 3' to a deoxyinosine leaving behind the intact lesion on the nicked DNA. In Thermus thermophilus (strain ATCC BAA-163 / DSM 7039 / HB27), this protein is Endonuclease V.